The following is a 286-amino-acid chain: Phosphatidylglycerol--prolipoprotein diacylglyceryl transferase (286 aa).

7 consecutive transmembrane segments (helical) span residues 29–49 (IHWY…VGTY), 66–86 (LVFY…VFFY), 101–121 (VWEG…AMML), 130–150 (FLDL…LGRI), 181–201 (PSQL…LFWF), 209–229 (AAVA…VEFV), and 250–270 (LSLP…RHPA). R149 contacts a 1,2-diacyl-sn-glycero-3-phospho-(1'-sn-glycerol).

Belongs to the Lgt family.

Its subcellular location is the cell inner membrane. It catalyses the reaction L-cysteinyl-[prolipoprotein] + a 1,2-diacyl-sn-glycero-3-phospho-(1'-sn-glycerol) = an S-1,2-diacyl-sn-glyceryl-L-cysteinyl-[prolipoprotein] + sn-glycerol 1-phosphate + H(+). Its pathway is protein modification; lipoprotein biosynthesis (diacylglyceryl transfer). In terms of biological role, catalyzes the transfer of the diacylglyceryl group from phosphatidylglycerol to the sulfhydryl group of the N-terminal cysteine of a prolipoprotein, the first step in the formation of mature lipoproteins. The protein is Phosphatidylglycerol--prolipoprotein diacylglyceryl transferase of Teredinibacter turnerae (strain ATCC 39867 / T7901).